The following is a 92-amino-acid chain: Small ribosomal subunit protein uS19 (92 aa).

It belongs to the universal ribosomal protein uS19 family.

Protein S19 forms a complex with S13 that binds strongly to the 16S ribosomal RNA. The chain is Small ribosomal subunit protein uS19 from Francisella tularensis subsp. tularensis (strain FSC 198).